Reading from the N-terminus, the 100-residue chain is Small ribosomal subunit protein uS14c (100 aa).

The protein belongs to the universal ribosomal protein uS14 family. Part of the 30S ribosomal subunit.

The protein localises to the plastid. The protein resides in the chloroplast. Functionally, binds 16S rRNA, required for the assembly of 30S particles. In Helianthus annuus (Common sunflower), this protein is Small ribosomal subunit protein uS14c.